A 65-amino-acid polypeptide reads, in one-letter code: Sulfur carrier protein TtuB (65 aa).

Gly-65 is modified (1-thioglycine; alternate). A Glycyl adenylate; alternate modification is found at Gly-65. Gly-65 participates in a covalent cross-link: Glycyl cysteine thioester (Gly-Cys) (interchain with C-192 in TtuC); alternate. A Glycyl lysine isopeptide (Gly-Lys) (interchain with K-? in acceptor proteins); alternate cross-link involves residue Gly-65.

This sequence belongs to the TtuB family. In terms of assembly, is able to form a heterocomplex with TtuA. In terms of processing, the C-terminal glycine residue of TtuB is first activated by TtuC as an acyl-adenylate (TtuB-COAMP), and then converted to the thiocarboxylate form (TtuB-COSH) by the cysteine desulfurases IscS or SufS.

Its pathway is tRNA modification. Its function is as follows. Required for the 2-thiolation of 5-methyluridine residue at position 54 in the T loop of tRNAs, leading to 5-methyl-2-thiouridine (m(5)s(2)U or s(2)T). This modification allows thermal stabilization of tRNAs in thermophilic microorganisms, and is essential for cell growth at high temperatures. Thiocarboxylated TtuB functions as the sulfur donor in the sulfurtransferase reaction catalyzed by TtuA. TtuB also functions as a protein modifier covalently attached to lysine residues of the target proteins TtuA and TtuC. TtuB conjugation might play a regulatory role to ensure appropriate sulfur transfer in cells. This Thermus thermophilus (strain ATCC BAA-163 / DSM 7039 / HB27) protein is Sulfur carrier protein TtuB.